The sequence spans 208 residues: Ribonuclease HII (208 aa).

The RNase H type-2 domain occupies 5–198 (PLIAGVDEVG…CQPRLEHDCR (194 aa)). Positions 11, 12, and 106 each coordinate a divalent metal cation.

This sequence belongs to the RNase HII family. Requires Mn(2+) as cofactor. Mg(2+) is required as a cofactor.

It is found in the cytoplasm. The catalysed reaction is Endonucleolytic cleavage to 5'-phosphomonoester.. Its function is as follows. Endonuclease that specifically degrades the RNA of RNA-DNA hybrids. This is Ribonuclease HII from Microcystis aeruginosa (strain NIES-843 / IAM M-2473).